A 512-amino-acid polypeptide reads, in one-letter code: Cytochrome P450 76C1 (512 aa).

The chain crosses the membrane as a helical span at residues 3–23 (IISGQALLLLFCFILSCFLIF). Position 450 (C450) interacts with heme.

The protein belongs to the cytochrome P450 family. Requires heme as cofactor.

Its subcellular location is the membrane. The chain is Cytochrome P450 76C1 (CYP76C1) from Arabidopsis thaliana (Mouse-ear cress).